The sequence spans 468 residues: Phosphatidylglycerol--prolipoprotein diacylglyceryl transferase (468 aa).

3 helical membrane passes run 21–41 (LPVR…LLIG), 56–76 (YDIA…YHLA), and 96–116 (IWDG…GAWI). Arg-144 contacts a 1,2-diacyl-sn-glycero-3-phospho-(1'-sn-glycerol). The next 3 helical transmembrane spans lie at 192–212 (VVQP…VALI), 218–238 (FIIG…AGRF), and 256–276 (INSF…ILAP). A disordered region spans residues 349 to 468 (VVQVADRDGE…RWWRLRRRRQ (120 aa)). Low complexity predominate over residues 391–406 (AEAASAAPEEPAALAS). The span at 445–455 (DGIRRQDDFSS) shows a compositional bias: basic and acidic residues. A compositionally biased stretch (basic residues) spans 456–468 (RRRRWWRLRRRRQ).

Belongs to the Lgt family.

It is found in the cell membrane. It carries out the reaction L-cysteinyl-[prolipoprotein] + a 1,2-diacyl-sn-glycero-3-phospho-(1'-sn-glycerol) = an S-1,2-diacyl-sn-glyceryl-L-cysteinyl-[prolipoprotein] + sn-glycerol 1-phosphate + H(+). It functions in the pathway protein modification; lipoprotein biosynthesis (diacylglyceryl transfer). Functionally, catalyzes the transfer of the diacylglyceryl group from phosphatidylglycerol to the sulfhydryl group of the N-terminal cysteine of a prolipoprotein, the first step in the formation of mature lipoproteins. This chain is Phosphatidylglycerol--prolipoprotein diacylglyceryl transferase, found in Mycobacterium bovis (strain ATCC BAA-935 / AF2122/97).